A 1122-amino-acid polypeptide reads, in one-letter code: Histidine kinase CKI1 (1122 aa).

Topologically, residues 1 to 12 are cytoplasmic; the sequence is MMVKVTKLVASR. A helical transmembrane segment spans residues 13 to 33; the sequence is PIVVFCVLAFLVVVFECIWIS. The Extracellular portion of the chain corresponds to 34–345; that stretch reads NWRTTTENLV…KHQAEKAKYQ (312 aa). A helical transmembrane segment spans residues 346 to 366; it reads LIVVMIFLGFGWPVWFVWFMM. Residues 367–1122 are Cytoplasmic-facing; the sequence is QATRREMHMR…VIREIESKRH (756 aa). Residues 402–671 form the Histidine kinase domain; the sequence is NASHDIRGAL…CFQFNVLLTT (270 aa). H405 is subject to Phosphohistidine; by autocatalysis. Residues 918-928 are compositionally biased toward basic and acidic residues; sequence AERSPKHKVQE. Residues 918–981 form a disordered region; that stretch reads AERSPKHKVQ…QETSKPSDDE (64 aa). In terms of domain architecture, Response regulatory spans 987–1120; it reads RVLVVDDNFI…ANVIREIESK (134 aa). The residue at position 1050 (D1050) is a 4-aspartylphosphate.

As to quaternary structure, homodimer. Interacts with AHP2 and AHP3. As to expression, expressed in vascular tissues of inflorescence stems and floral organs, especially in procambium cells, and in siliques.

The protein resides in the cell membrane. The catalysed reaction is ATP + protein L-histidine = ADP + protein N-phospho-L-histidine.. In terms of biological role, essential protein. Functions as a histidine kinase and transmits the stress signal to a downstream MAPK cascade. This protein undergoes an ATP-dependent autophosphorylation at a conserved histidine residue in the kinase core, and a phosphoryl group is then transferred to a conserved aspartate residue in the receiver domain. Required for the development of megagametophyte in female gametophyte (embryo sac) independently of cytokinin. Contributes to vascular bundle formation and secondary growth in a cytokinin-independent manner, probably by promoting the maintenance of mitotic activity and/or identity of procambial cells. Seems to influence and promote the cytokinin signaling pathway. In Arabidopsis thaliana (Mouse-ear cress), this protein is Histidine kinase CKI1 (CKI1).